Reading from the N-terminus, the 345-residue chain is G-protein coupled receptor family C group 5 member D (345 aa).

At 1–27 (MYKDCIESTGDYFLLCDAEGPWGIILE) the chain is on the extracellular side. A helical membrane pass occupies residues 28 to 48 (SLAILGIVVTILLLLAFLFLM). Topologically, residues 49–63 (RKIQDCSQWNVLPTQ) are cytoplasmic. A helical membrane pass occupies residues 64–84 (LLFLLSVLGLFGLAFAFIIEL). Topologically, residues 85–93 (NQQTAPVRY) are extracellular. Residues 94 to 114 (FLFGVLFALCFSCLLAHASNL) form a helical membrane-spanning segment. Topologically, residues 115–123 (VKLVRGCVS) are cytoplasmic. Residues 124 to 144 (FSWTTILCIAIGCSLLQIIIA) traverse the membrane as a helical segment. Residues 145–167 (TEYVTLIMTRGMMFVNMTPCQLN) lie on the Extracellular side of the membrane. A helical transmembrane segment spans residues 168-188 (VDFVVLLVYVLFLMALTFFVS). Residues 189–204 (KATFCGPCENWKQHGR) are Cytoplasmic-facing. Residues 205 to 225 (LIFITVLFSIIIWVVWISMLL) form a helical membrane-spanning segment. The Extracellular portion of the chain corresponds to 226 to 239 (RGNPQFQRQPQWDD). Residues 240–260 (PVVCIALVTNAWVFLLLYIVP) form a helical membrane-spanning segment. The Cytoplasmic segment spans residues 261-345 (ELCILYRSCR…LSPQQDAGGV (85 aa)).

Belongs to the G-protein coupled receptor 3 family. Homodimer. As to expression, widely expressed in the peripheral system. Expression pattern is high in pancreas, medium in kidney, small intestine, spleen and testis, low in lung, colon, leukocyte, prostate and thymus and not detectable in brain, heart, liver, placenta, skeletal muscle and ovary.

The protein resides in the cell membrane. G-protein coupled receptor involved in hard keratin expression and likely plays a role in the development of hair and nails. The chain is G-protein coupled receptor family C group 5 member D (GPRC5D) from Homo sapiens (Human).